The following is a 173-amino-acid chain: Regulatory protein RecX (173 aa).

Belongs to the RecX family.

The protein resides in the cytoplasm. In terms of biological role, modulates RecA activity. This chain is Regulatory protein RecX, found in Mycobacterium avium (strain 104).